A 959-amino-acid chain; its full sequence is Ataxin-2 homolog (959 aa).

The region spanning 13-92 is the Sm domain; that stretch reads DVLSAINDMI…IVDFAYVTQE (80 aa). 5 disordered regions span residues 203-378, 392-484, 501-528, 697-831, and 867-959; these read AREI…GSRV, TAPK…SVIT, PRVAPATPTATTPVQNEYHPQQQPHPAM, PPQG…QHIQ, and PMQQ…QSPP. Positions 226-235 are enriched in basic and acidic residues; sequence DLDKITRQED. Over residues 246-260 the composition is skewed to low complexity; that stretch reads NNSFNQQQQQRRNPN. Residues 270–281 are compositionally biased toward basic and acidic residues; that stretch reads RRAEGLRGDRRN. A compositionally biased stretch (low complexity) spans 282 to 313; the sequence is SGSSSANNSRYGAPAAAQQNYSQNQQQQQGQK. Composition is skewed to polar residues over residues 341-356 and 473-484; these read RQQQKQMLDPRPNNNV and VSVTSENDSVIT. Composition is skewed to low complexity over residues 504–528, 697–707, and 715–725; these read APATPTATTPVQNEYHPQQQPHPAM, PPQGQQQQPRY, and QQQQQQPQQQQ. 2 stretches are compositionally biased toward polar residues: residues 726 to 742 and 756 to 765; these read FSGEQSRPQSHPNSQPT and APQNGNMQAE. A compositionally biased stretch (low complexity) spans 766 to 788; it reads SSSNASHSGSTSSQSGQRSGSPP. The segment covering 789-798 has biased composition (pro residues); it reads GAVPPPPPPQ. 3 stretches are compositionally biased toward low complexity: residues 822–831, 867–876, and 902–911; these read MMQQQQQHIQ, PMQQNQHPQQ, and QQQQQQQQQQ. The segment covering 912–922 has biased composition (polar residues); the sequence is MHRQNSLPQQF. The span at 923 to 935 shows a compositional bias: low complexity; sequence QGNQGVNPSGQQS. A compositionally biased stretch (polar residues) spans 948 to 959; the sequence is TPRDQQHSQSPP.

This sequence belongs to the ataxin-2 family. In terms of assembly, interacts (via C-terminus) with szy-20 (via C-terminus); the interaction is RNA independent. Interacts with pab-1. Interacts with gdi-1. In terms of tissue distribution, expressed in the central nervous system, dorsal and ventral nerve cord, intestinal lining and body-wall muscle. Expressed in the gonad.

The protein localises to the cytoplasm. Its subcellular location is the nucleus. Probable RNA-binding protein that negatively regulates the translation of targets. Functions with RNA-binding protein szy-20 to ensure embryonic cell division, and to this end, plays a role in the regulation of centrosome assembly, position and size, and in astral microtubule outgrowth and nucleation. Required for gonad development, germ cell proliferation and for the production of oocytes. Regulates whole body growth and fat accumulation in response to food availability, and this may be through the mTOR pathway, upstream of daf-15 and rheb-1. The chain is Ataxin-2 homolog from Caenorhabditis elegans.